A 508-amino-acid chain; its full sequence is MAADWLGSIVSINCGDSLGVYQGRVSAVDQVSQTISLTRPFHNGVKCLVPEVTFRAGDITELKILEIPGPGGNQHFGDVHQTELGPSGVGCQVGISQNGTGKLVKKPTSSSSAPQNIPKRTDVKSQDVAVSPQQQQCSKSYVDRHMESLSQSKSFRRRHNSWSSSSRHPNQATPKKSGLKNGQMKNKDDECFGDDIEEIPDTDFDFEGNLALFDKAAVFEEIGTYERRSGTRSRGIPNERPTRYRHDENILESEPIVYRRITVPHNVSKEFCTDSGLVVPSVSYEQHKKLLSVAEKHGLTLERRLEMTGVCASQMALTLLGGPNRLNPKNVHQRPTVALLCGPHVKGAQGISCGRHLANHDVQVILFLPNFVKMLESITNELSLFSKTQGQQVSSLKDLPTSPVDLVINCLDCPENVFLRDQPWYKAAVAWANQNRAPVLSIDPPVHEVEQGIDAKWSLALGLPLPLGEHAGRIYLCDIGIPQQVFQEVGINYHSPFGCKFVIPLHSA.

Residues 1 to 68 (MAADWLGSIV…ITELKILEIP (68 aa)) form the Sm domain. A required for P-body targeting and interaction with DCP1A region spans residues 1 to 79 (MAADWLGSIV…PGGNQHFGDV (79 aa)). The interval 95 to 192 (ISQNGTGKLV…QMKNKDDECF (98 aa)) is disordered. Ser-131, Ser-138, Ser-140, and Ser-161 each carry phosphoserine. A required for interaction with DDX6 region spans residues 191–296 (CFGDDIEEIP…HKKLLSVAEK (106 aa)). In terms of domain architecture, DFDF spans 192 to 228 (FGDDIEEIPDTDFDFEGNLALFDKAAVFEEIGTYERR). Residues 283–487 (SYEQHKKLLS…DIGIPQQVFQ (205 aa)) enclose the YjeF N-terminal domain.

Belongs to the EDC3 family. Homodimer (via YjeF N-terminal domain). Forms a complex with DCP1A, DCP2, DDX6 and EDC4/HEDLS, within this complex directly interacts with DCP1A and DDX6. Interacts with ZFP36.

It is found in the cytoplasm. The protein localises to the P-body. Binds single-stranded RNA. Involved in the process of mRNA degradation and in the positive regulation of mRNA decapping. The protein is Enhancer of mRNA-decapping protein 3 (EDC3) of Macaca fascicularis (Crab-eating macaque).